Consider the following 642-residue polypeptide: Sodium-dependent phosphate transport protein 2A (642 aa).

Residues 1–106 (MISYGEQLSS…LRRTAMTLLK (106 aa)) lie on the Cytoplasmic side of the membrane. Phosphoserine is present on residues Ser14 and Ser37. The helical transmembrane segment at 107 to 128 (LPLMVTFLYLFVCSLDVLSSAF) threads the bilayer. Over 129–148 (QLAGGKVAGDIFKDNAILAN) the chain is Extracellular. A helical transmembrane segment spans residues 149–166 (PVAGLVVGILVTVLVQSS). The Cytoplasmic portion of the chain corresponds to 167–168 (ST). Residues 169 to 188 (ATSIIVSMVSSGLLEVSSAI) form a helical membrane-spanning segment. At 189–350 (PIIMGSNIGT…HIFVDTQLPD (162 aa)) the chain is on the extracellular side. 2 disulfides stabilise this stretch: Cys228–Cys525 and Cys309–Cys339. 3 N-linked (GlcNAc...) asparagine glycosylation sites follow: Asn301, Asn326, and Asn333. Residues 351–373 (LAVGLILLAGSLVLLCTCLILLV) traverse the membrane as a helical segment. Residues 374 to 415 (KMLNSLLKGQVAKVIQKVINTDLPAPFTWVTGYFAMVVGAAM) are Cytoplasmic-facing. A helical membrane pass occupies residues 416–439 (TFIVQSSSVFTSAITPLVGLGVIS). At 440–469 (IERAYPLTLGSNIGTTTTAILAALASPREK) the chain is on the extracellular side. A helical transmembrane segment spans residues 470–490 (LSSSFQIALCHFFFNISGILL). Topologically, residues 491–516 (WYPLPCTRLPIRMAKALGKRTAKYRW) are cytoplasmic. Phosphothreonine; by PKC is present on Thr511. The chain crosses the membrane as a helical span at residues 517 to 537 (FAVLYLLVCFLLLPSLVFGIS). Topologically, residues 538-542 (MAGWR) are extracellular. Residues 543–564 (AMVGVGAPFGALLAFVVLINVL) traverse the membrane as a helical segment. The Cytoplasmic portion of the chain corresponds to 565-642 (QSRSPGRLPK…LPAHHNATRL (78 aa)). The residue at position 610 (Ser610) is a Phosphoserine. A Phosphothreonine modification is found at Thr626. Residue Ser628 is modified to Phosphoserine.

The protein belongs to the SLC34A transporter family. As to quaternary structure, interacts via its C-terminal region with NHERF4. Interacts with NHERF1. Interacts with TMEM174; regulates SLC34A1 internalization by PTH and FGF23. Expressed in the kidney cortex.

It localises to the apical cell membrane. Its subcellular location is the cell membrane. The enzyme catalyses 3 Na(+)(out) + phosphate(out) = 3 Na(+)(in) + phosphate(in). With respect to regulation, transport activity is significantly increased in response to dietary phosphate deprivation. Involved in actively transporting phosphate into cells via Na(+) cotransport in the renal brush border membrane. The cotransport has a Na(+):Pi stoichiometry of 3:1 and is electrogenic. The polypeptide is Sodium-dependent phosphate transport protein 2A (Oryctolagus cuniculus (Rabbit)).